The sequence spans 408 residues: GTPase Obg (408 aa).

The 159-residue stretch at 1-159 folds into the Obg domain; the sequence is MKFVDEVSIR…RDLKMEMKVL (159 aa). The segment at 127-148 is disordered; sequence NTRFKSSTNRAPRQTTPGKPGE. The span at 129-143 shows a compositional bias: polar residues; sequence RFKSSTNRAPRQTTP. The 174-residue stretch at 160–333 folds into the OBG-type G domain; that stretch reads ADVGLLGLPN…LSHDLMRYLE (174 aa). GTP contacts are provided by residues 166–173, 191–195, 213–216, 283–286, and 314–316; these read GLPNAGKS, FTTLV, DIPG, NKAD, and SAI. Residues serine 173 and threonine 193 each contribute to the Mg(2+) site. The span at 385-401 shows a compositional bias: acidic residues; sequence GDDDGWDDDFEDDEDGP. The tract at residues 385–408 is disordered; sequence GDDDGWDDDFEDDEDGPEIIYVRD.

Belongs to the TRAFAC class OBG-HflX-like GTPase superfamily. OBG GTPase family. As to quaternary structure, monomer. It depends on Mg(2+) as a cofactor.

Its subcellular location is the cytoplasm. In terms of biological role, an essential GTPase which binds GTP, GDP and possibly (p)ppGpp with moderate affinity, with high nucleotide exchange rates and a fairly low GTP hydrolysis rate. Plays a role in control of the cell cycle, stress response, ribosome biogenesis and in those bacteria that undergo differentiation, in morphogenesis control. The chain is GTPase Obg from Pseudomonas putida (strain ATCC 700007 / DSM 6899 / JCM 31910 / BCRC 17059 / LMG 24140 / F1).